The primary structure comprises 719 residues: Anaphase-promoting complex subunit 4 (719 aa).

Residues 57 to 96 form a WD repeat; that stretch reads NSQRIWDVDFHDLEATELCWNHDGNLIVVGFKNGELKIID.

In terms of assembly, the APC/C is composed of at least 13 subunits: apc1, apc2, nuc2, apc4, apc5, cut9, apc8, apc10, apc11, hcn1, apc13, apc14 and apc15. Interacts with apc1 and dim1.

In terms of biological role, component of the anaphase-promoting complex/cyclosome (APC/C), a cell cycle-regulated E3 ubiquitin-protein ligase complex that controls progression through mitosis and the G1 phase of the cell cycle. The APC/C is thought to confer substrate specificity and, in the presence of ubiquitin-conjugating E2 enzymes, it catalyzes the formation of protein-ubiquitin conjugates that are subsequently degraded by the 26S proteasome. Has a role in promoting metaphase to anaphase transition via the ubiquitination of specific mitotic substrates. This is Anaphase-promoting complex subunit 4 (cut20) from Schizosaccharomyces pombe (strain 972 / ATCC 24843) (Fission yeast).